A 115-amino-acid chain; its full sequence is Large ribosomal subunit protein bL20 (115 aa).

It belongs to the bacterial ribosomal protein bL20 family.

In terms of biological role, binds directly to 23S ribosomal RNA and is necessary for the in vitro assembly process of the 50S ribosomal subunit. It is not involved in the protein synthesizing functions of that subunit. The sequence is that of Large ribosomal subunit protein bL20 from Microcystis aeruginosa (strain NIES-843 / IAM M-2473).